Here is a 98-residue protein sequence, read N- to C-terminus: Citrate lyase acyl carrier protein (98 aa).

At Ser-14 the chain carries O-(phosphoribosyl dephospho-coenzyme A)serine.

This sequence belongs to the CitD family. As to quaternary structure, oligomer with a subunit composition of (alpha,beta,gamma)6.

It localises to the cytoplasm. Functionally, covalent carrier of the coenzyme of citrate lyase. This Vibrio cholerae serotype O1 (strain ATCC 39315 / El Tor Inaba N16961) protein is Citrate lyase acyl carrier protein.